The chain runs to 548 residues: ETS domain-containing transcription factor ERF (548 aa).

Phosphothreonine occurs at positions 3 and 7. Phosphoserine occurs at positions 20 and 24. A DNA-binding region (ETS) is located at residues 27–107 (IQLWHFILEL…KGKRFTYKFN (81 aa)). 3 disordered regions span residues 130–169 (QSAP…SSSS), 184–225 (GSVS…LARL), and 280–304 (SPTL…SHFS). 2 positions are modified to phosphoserine: Ser185 and Ser190. The segment covering 289–301 (SGGGGPSGSGGGS) has biased composition (gly residues). Ser327 carries the phosphoserine modification. Residues 342 to 478 (PQRPDKCPLP…GEAPGASQCM (137 aa)) form a disordered region. Over residues 348-361 (CPLPPMAPETPPVP) the composition is skewed to pro residues. Low complexity-rich tracts occupy residues 362 to 373 (SSASSSSSSSSS) and 394 to 403 (KAVAGADKSG). Phosphoserine occurs at positions 431 and 435. Acidic residues predominate over residues 431–451 (SEGESEEVEVTDISDEDEEDG). The residue at position 441 (Thr441) is a Phosphothreonine. Phosphoserine is present on Ser444. Residues Lys465, Lys481, and Lys512 each participate in a glycyl lysine isopeptide (Lys-Gly) (interchain with G-Cter in SUMO2) cross-link. The interval 492–548 (CRLEGGGGPAGGFEDEGEDKKVRGEGPGEAGGPLTPRRVSSDLQHATAQLSLEHRDS) is disordered. The residue at position 526 (Thr526) is a Phosphothreonine; by MAPK1. Residues Ser531, Ser532, and Ser548 each carry the phosphoserine modification. The span at 532–541 (SDLQHATAQL) shows a compositional bias: polar residues.

It belongs to the ETS family. In terms of processing, phosphorylated by multiple kinases including MAPK1/ERK2 at THR-526. Phosphorylation regulates the activity of ERF. In terms of tissue distribution, highest levels in testis, ovary, pancreas, and heart.

It is found in the nucleus. In terms of biological role, potent transcriptional repressor that binds to the H1 element of the Ets2 promoter. May regulate other genes involved in cellular proliferation. Required for extraembryonic ectoderm differentiation, ectoplacental cone cavity closure, and chorioallantoic attachment. May be important for regulating trophoblast stem cell differentiation. The protein is ETS domain-containing transcription factor ERF (ERF) of Homo sapiens (Human).